The following is a 158-amino-acid chain: Transcriptional repressor NrdR (158 aa).

The segment at 3–34 is a zinc-finger region; sequence CPSCQNTDSRVLESRAADGGRSVRRRRECLNC. Residues 49-139 enclose the ATP-cone domain; that stretch reads ITVIKRDGCR…VYRQFRGIDD (91 aa).

Belongs to the NrdR family. Zn(2+) is required as a cofactor.

In terms of biological role, negatively regulates transcription of bacterial ribonucleotide reductase nrd genes and operons by binding to NrdR-boxes. The sequence is that of Transcriptional repressor NrdR from Synechococcus sp. (strain CC9902).